Reading from the N-terminus, the 395-residue chain is MLAAGSCSVRTILQPALLLGHSREVVCELVTSFRNFCSKYSVPPSPKYGGKHTVTMIPGDGIGPELMVHVKRIFRSNCVPVEFEEVWATSTSSEEEINNALMAIRRNRITLKGNIATNHHLPAKYKSHNTKFRTALDLYASVVHFKTFPGVETRHKDIDILVVRENTEGEYTNLEHESVRGVVESLKIVTKTKSVRIADYAFRLAQKMGRKKVTVVHKANIMKLGDGLFLQCCKDVAAHYPQITLESMIIDNTAMQLVSKPQQFDVMLMPNLYGNIINSVCTGLVGGSGIVPGANYGDSYAIFETGSKEIGQDLAHRNIANPVAMLLTSCIMLDYLDLQLYAAHIRSAVMASLQNKSICTPDIGGQGTTAGVVEYILDHMKDQNSGCQPRFFLST.

A mitochondrion-targeting transit peptide spans 1-25; it reads MLAAGSCSVRTILQPALLLGHSREV. A citrate-binding site is contributed by threonine 117. Positions 133, 164, and 251 each coordinate substrate. Aspartate 251 serves as a coordination point for Mn(2+). Asparagine 321 serves as a coordination point for ADP.

This sequence belongs to the isocitrate and isopropylmalate dehydrogenases family. Heterooligomer of subunits alpha (IDH3A), beta (IDH3B), and gamma (IDH3G) in the apparent ratio of 2:1:1. The heterodimer containing one IDH3A and one IDH3B subunit and the heterodimer containing one IDH3A and one IDH3G subunit assemble into a heterotetramer (which contains two subunits of IDH3A, one of IDH3B and one of IDH3G) and further into the heterooctamer. The cofactor is Mg(2+). Mn(2+) serves as cofactor.

It is found in the mitochondrion. With respect to regulation, the heterotetramer and the heterodimer composed of IDH3A and IDH3G subunits can be allosterically activated by citrate (CIT) or/and ADP, and the two activators can act independently or synergistically. The heterodimer composed of IDH3A and IDH3B subunits cannot be allosterically regulated and the allosteric regulation of the heterotetramer is through the IDH3G subunit and not the IDH3B subunit. The IDH3G subunit contains the allosteric site which consists of a CIT-binding site and an ADP-binding site, and the binding of CIT and ADP causes conformational changes at the allosteric site which are transmitted to the active site in the catalytic subunit (IDH3A) through a cascade of conformational changes at the heterodimer interface, leading to stabilization of the isocitrate-binding at the active site and thus activation of the enzyme. ATP can activate the heterotetramer and the heterodimer composed of IDH3A and IDH3G subunits at low concentrations but inhibits their activities at high concentrations, whereas ATP exhibits only inhibitory effect on the heterodimer composed of IDH3A and IDH3B subunits. In terms of biological role, regulatory subunit which plays a role in the allosteric regulation of the enzyme catalyzing the decarboxylation of isocitrate (ICT) into alpha-ketoglutarate. The heterodimer composed of the alpha (IDH3A) and beta (IDH3B) subunits and the heterodimer composed of the alpha (IDH3A) and gamma (IDH3G) subunits, have considerable basal activity but the full activity of the heterotetramer (containing two subunits of IDH3A, one of IDH3B and one of IDH3G) requires the assembly and cooperative function of both heterodimers. The sequence is that of Probable isocitrate dehydrogenase [NAD] gamma 2, mitochondrial from Rattus norvegicus (Rat).